A 317-amino-acid polypeptide reads, in one-letter code: (2S)-3-sulfopropanediol dehydratase activating enzyme (317 aa).

Residues 18-306 (HDGPGLRTEL…QMLAEYFNQR (289 aa)) enclose the Radical SAM core domain. Residues Cys32, Cys36, Cys39, Cys58, Cys64, Cys67, Cys71, Cys92, Cys95, Cys98, and Cys102 each coordinate [4Fe-4S] cluster. Residue 38 to 40 (WCS) coordinates S-adenosyl-L-methionine. 2 consecutive 4Fe-4S ferredoxin-type domains span residues 49-82 (AQVGVYKTKCISYKKCAACEETCPQENILQFTRG) and 83-112 (KLTSIERHDCTNCLACHNACPSDAIKLWGK). S-adenosyl-L-methionine contacts are provided by residues Gly142 and 191–193 (DIK).

It belongs to the organic radical-activating enzymes family. [4Fe-4S] cluster serves as cofactor.

It catalyses the reaction glycyl-[protein] + reduced [flavodoxin] + S-adenosyl-L-methionine = glycin-2-yl radical-[protein] + semiquinone [flavodoxin] + 5'-deoxyadenosine + L-methionine + H(+). It functions in the pathway organosulfur degradation; alkanesulfonate degradation. Involved in the degradation of the organosulfur compound 2(S)-dihydroxypropanesulfonate (DHPS). Catalyzes activation of the (2S)-3-sulfopropanediol dehydratase HpfG under anaerobic conditions by generation of an organic free radical on a glycine residue. This Klebsiella oxytoca protein is (2S)-3-sulfopropanediol dehydratase activating enzyme.